A 219-amino-acid polypeptide reads, in one-letter code: Probable oxidoreductase virH (219 aa).

It belongs to the oxidoreductase OpS7 family.

The protein operates within secondary metabolite biosynthesis. In terms of biological role, probable oxidoreductase; part of the gene cluster that mediates the biosynthesis of virensols and trichoxide, fungal natural products that contain or are derived from a salicylaldehyde core. The pathway begins with the synthesis of the reduced chain in virensol C by the highly reducing polyketide synthase virA via condensation of one acetate and 8 malonate units. VirA has interesting programming rules since the first 2 ketides are fully reduced, the 3 following ketides undergo beta-dehydration, and the last 3 ketides are only reduced to beta-hydroxys to yield the trihydroxy portion. The production of aldehyde virensol C by virA alone is surprising, since virA does not contain a reductase (R) domain that is typically associated with reductive product release in HRPKS. The cupin-domain enzyme virC is involved in enhancing virA product turnover. The short-chain dehydrogenase virB then oxidizes the C-7 alcohol of virensol C to a ketone, yielding virensol D. Virensol D is further transformed to salicylaldehyde 5-deoxyaurocitrin by the short-chain dehydrogenase virD. VirD catalyzes the dehydrogenation of C-3 to form the beta-ketone aldehyde, which is followed by the generation of the nucleophilic C-2 that is required for the intramolecular aldol condensation between C-2 and C-7, itself followed by dehydration and aromatization which leads to salicylaldehyde 5-deoxyaurocitrin. While the dehydrogenation of virensol D is definitely catalyzed by virD, the aldol condensation and dehydration may be uncatalyzed or assisted by virD. The short chain dehydrogenase virG then converts salicylaldehyde 5-deoxyaurocitrin into virensol B which is further hydroxylated by the cytochrome P450 monooxygenase virE to yield the hydroquinone virensol A. VirI then may oxidize virensol A to form the quinone, while virH performs the epoxidation. Finally, the two remaining short-chain dehydrogenases, virK and virL, are probably responsible for reducing the ketones to the corresponding alcohols to furnish the epoxycyclohexanol structure in trichoxide. The sequence is that of Probable oxidoreductase virH from Hypocrea virens (strain Gv29-8 / FGSC 10586) (Gliocladium virens).